The chain runs to 373 residues: Putative F-box protein At1g76830 (373 aa).

The F-box domain maps to 4-49 (ITSFENLPEELKREILLRMSPNSLVTCSRVSKKLASMIRTKSFKEL).

This is Putative F-box protein At1g76830 from Arabidopsis thaliana (Mouse-ear cress).